We begin with the raw amino-acid sequence, 238 residues long: uncharacterized protein (238 aa).

This sequence belongs to the chlamydial CPn_0658/CT_538/TC_0825 family.

This is an uncharacterized protein from Chlamydia trachomatis serovar D (strain ATCC VR-885 / DSM 19411 / UW-3/Cx).